A 444-amino-acid polypeptide reads, in one-letter code: MRPSAAAGGGGGGGGRRKAAAAAAAASREWLVVPASGQARVEEAGKHAVMARTGLPARDLRVLDPLLSYPSTILGRERAIVVNLERVKAVITAAEVLLPNSKDPAFASFVCDLQARVLASSSDQAAEFTDMEGESSAVTSPFPALTSTTPNELEMTNKNSNVVGGMTHSNSMPTLTAAKDGNTKVLPFEFRALEVCLESACRSLEEETSTLEQEAYPALDELTSKISTLNLERVRQIKSRLVAISGRVQKVRDELEHLLDDEMDMAEMYLTEKLTRQEISETSSRVEVDDPSQLEVDRDEDYRSEADVSNGTFIGYKPHIEELEMLLEAYFVQIDGTLNKLSHLREYVDDTEDYINIMLDDKQNQLLQMGVMLSTATVVITAGVAVVGLFGMNIGISLYADPTNEEEKRASNMKFWETTLGTIAGCTVMYIVAMGWGKRSGLLQ.

Residues 128-155 form a disordered region; that stretch reads FTDMEGESSAVTSPFPALTSTTPNELEM. Over residues 145–155 the composition is skewed to polar residues; that stretch reads LTSTTPNELEM. The stretch at 195–258 forms a coiled coil; the sequence is VCLESACRSL…QKVRDELEHL (64 aa). Residues 370-390 traverse the membrane as a helical segment; that stretch reads GVMLSTATVVITAGVAVVGLF. Residues 391 to 393 carry the Required for magnesium transport activity motif; it reads GMN. The chain crosses the membrane as a helical span at residues 415 to 435; that stretch reads FWETTLGTIAGCTVMYIVAMG.

Belongs to the CorA metal ion transporter (MIT) (TC 1.A.35.5) family.

It is found in the membrane. In terms of biological role, magnesium transporter that may mediate the influx of magnesium. The chain is Magnesium transporter MRS2-F (MRS2-F) from Oryza sativa subsp. indica (Rice).